The chain runs to 409 residues: tRNA(Met) cytidine acetate ligase (409 aa).

ATP-binding positions include 7 to 20 (VVEY…HLHH), G102, N169, and R194.

This sequence belongs to the TmcAL family.

The protein resides in the cytoplasm. The catalysed reaction is cytidine(34) in elongator tRNA(Met) + acetate + ATP = N(4)-acetylcytidine(34) in elongator tRNA(Met) + AMP + diphosphate. Catalyzes the formation of N(4)-acetylcytidine (ac(4)C) at the wobble position of elongator tRNA(Met), using acetate and ATP as substrates. First activates an acetate ion to form acetyladenylate (Ac-AMP) and then transfers the acetyl group to tRNA to form ac(4)C34. In Clostridium botulinum (strain Loch Maree / Type A3), this protein is tRNA(Met) cytidine acetate ligase.